Here is a 317-residue protein sequence, read N- to C-terminus: Olfactory receptor 10AD1 (317 aa).

The Extracellular segment spans residues 1 to 25; the sequence is MLRNGSIVTEFILVGFQQSSTSTRA. An N-linked (GlcNAc...) asparagine glycan is attached at Asn-4. A helical membrane pass occupies residues 26 to 46; sequence LLFALFLALYSLTMAMNGLII. The Cytoplasmic portion of the chain corresponds to 47-55; the sequence is FITSWTDPK. Residues 56–76 form a helical membrane-spanning segment; that stretch reads LNSPMYFFLGHLSLLDVCFIT. Residues 77-100 are Extracellular-facing; the sequence is TTIPQMLIHLVVRDHIVSFVCCMT. A disulfide bridge links Cys-98 with Cys-190. Residues 101 to 121 traverse the membrane as a helical segment; that stretch reads QMYFVFCVGVAECILLAFMAY. At 122 to 140 the chain is on the cytoplasmic side; that stretch reads DRYVAICYPLNYVPIISQK. The chain crosses the membrane as a helical span at residues 141 to 161; the sequence is VCVRLVGTAWFFGLINGIFLE. At 162 to 198 the chain is on the extracellular side; that stretch reads YISFREPFRRDNHIESFFCEAPIVIGLSCGDPQFSLW. A helical membrane pass occupies residues 199–218; it reads AIFADAIVVILSPMVLTVTS. Residues 219–238 are Cytoplasmic-facing; that stretch reads YVHILATILSKASSSGRGKT. Residues 239 to 259 traverse the membrane as a helical segment; sequence FSTCASHLTVVIFLYTSAMFS. Residues 260–272 are Extracellular-facing; sequence YMNPHSTHGPDKD. A helical membrane pass occupies residues 273 to 293; the sequence is KPFSLLYTIITPMCNPIIYSF. Residues 294-317 are Cytoplasmic-facing; sequence RNKEIKEAMVRALGRTRLAQPQSV.

It belongs to the G-protein coupled receptor 1 family.

Its subcellular location is the cell membrane. Its function is as follows. Odorant receptor. This chain is Olfactory receptor 10AD1 (OR10AD1), found in Homo sapiens (Human).